Here is a 1664-residue protein sequence, read N- to C-terminus: MYND-type zinc finger-containing chromatin reader Zmynd8 (1664 aa).

Composition is skewed to low complexity over residues 1–16, 30–40, and 61–84; these read MEST…SLKS, SPQPQLQSSSL, and SAPP…INVG. Disordered stretches follow at residues 1-84, 251-271, and 295-323; these read MEST…INVG, SLSN…LRSE, and LALN…KTPE. Residues 258-271 are compositionally biased toward basic and acidic residues; the sequence is NDDKGPRRSNLRSE. Residues 296 to 308 are compositionally biased toward polar residues; the sequence is ALNTSGEGESSLF. Low complexity predominate over residues 309 to 320; sequence SDASDTKTTTAK. The segment at 343-389 adopts a PHD-type zinc-finger fold; the sequence is DPFCWKCRGCGKLMPCSKCLRSFHSYCVRPATTKFDSSWKCPECQVI. Zn(2+)-binding residues include Cys-346, Cys-349, Cys-358, Cys-361, His-366, Cys-369, Cys-383, and Cys-386. The Bromo domain occupies 401 to 504; it reads VSVDLLSQLL…KVCRQEANEI (104 aa). The Zn(2+) site is built by Cys-507, Cys-510, and Cys-525. The region spanning 528–579 is the PWWP domain; it reads PHLLLWAKLKGFPYWPAKAMGSSNSTLVNVRFFGKHDRAFVPVKDCFLYSAQ. Disordered regions lie at residues 672–693, 747–815, 857–905, and 919–1139; these read KTKA…KKLS, ESVE…QNEN, KIPR…RQQE, and TEVM…TNTS. The span at 676–690 shows a compositional bias: polar residues; it reads TESGNESDQSPSPTK. Over residues 775 to 784 the composition is skewed to basic residues; that stretch reads HKRKSKHARK. Over residues 785–800 the composition is skewed to basic and acidic residues; sequence QHDNQDNQIEEAEKTG. Residues 874-884 are compositionally biased toward pro residues; it reads IPLPTAPPPKQ. Residues 935–952 show a composition bias toward polar residues; sequence PANQPQTDQVPLQQETIT. Over residues 953–962 the composition is skewed to low complexity; it reads AQPESQMPAA. A compositionally biased stretch (pro residues) spans 1006-1019; it reads PPMPLPMPPPPPLP. A compositionally biased stretch (polar residues) spans 1037–1053; sequence TTIQRVSQKQGGKSTDT. Low complexity predominate over residues 1073-1097; that stretch reads SPTHSPLLSTAPSPSASPKPTSTLA. Zn(2+) contacts are provided by Cys-1399, Cys-1402, Cys-1410, Cys-1411, Cys-1417, Cys-1421, His-1429, and Cys-1433. An MYND-type zinc finger spans residues 1399–1433; sequence CANCMREAQLYCCWNTSYCDYPCQQLHWPGHSATC. The disordered stretch occupies residues 1613-1648; the sequence is VPKATGRSGKNNSRMRQTYSNNINNSNPQGMRCNNN. A compositionally biased stretch (polar residues) spans 1620-1648; that stretch reads SGKNNSRMRQTYSNNINNSNPQGMRCNNN.

It is found in the nucleus. It localises to the chromosome. In terms of biological role, chromatin reader that recognizes specific histone signatures to regulate transcription. Plays a role in neuronal development. The protein is MYND-type zinc finger-containing chromatin reader Zmynd8 of Drosophila melanogaster (Fruit fly).